Here is a 97-residue protein sequence, read N- to C-terminus: YcgL domain-containing protein PputW619_3899 (97 aa).

The YcgL domain occupies 3 to 87 (RICSIYKSPR…AEDEYIEHLP (85 aa)).

The polypeptide is YcgL domain-containing protein PputW619_3899 (Pseudomonas putida (strain W619)).